The primary structure comprises 1112 residues: Cytosolic carboxypeptidase 4 (1112 aa).

The segment at 291-345 (TTEPPHDLPEEDFEDDGDDEVDKDSDTEDGKVEDDDLETDVNKLSSKPGLDRPEE) is disordered. Positions 299 to 329 (PEEDFEDDGDDEVDKDSDTEDGKVEDDDLET) are enriched in acidic residues. In terms of domain architecture, Peptidase M14 spans 732-1022 (YPYTYTALMT…HPVDGLQGLQ (291 aa)). Residues His804, Glu807, and His901 each coordinate Zn(2+). Glu986 (proton donor/acceptor) is an active-site residue.

This sequence belongs to the peptidase M14 family. Interacts with MYLK. Interacts with TCF4. It depends on Zn(2+) as a cofactor. As to expression, expressed in corneal endothelium.

It is found in the cytoplasm. It localises to the cytosol. The enzyme catalyses (L-glutamyl)(n+1)-gamma-L-glutamyl-L-glutamyl-[protein] + H2O = (L-glutamyl)(n)-gamma-L-glutamyl-L-glutamyl-[protein] + L-glutamate. It carries out the reaction C-terminal L-alpha-aminoacyl-L-glutamyl-L-glutamyl-[tubulin] + H2O = C-terminal L-alpha-aminoacyl-L-glutamyl-[tubulin] + L-glutamate. In terms of biological role, metallocarboxypeptidase that mediates deglutamylation of tubulin and non-tubulin target proteins. Catalyzes the removal of polyglutamate side chains present on the gamma-carboxyl group of glutamate residues within the C-terminal tail of tubulin protein. Specifically cleaves tubulin long-side-chains, while it is not able to remove the branching point glutamate. Also catalyzes the removal of polyglutamate residues from the carboxy-terminus of non-tubulin proteins such as MYLK. In Homo sapiens (Human), this protein is Cytosolic carboxypeptidase 4.